The following is a 419-amino-acid chain: Multifunctional CCA protein (419 aa).

2 residues coordinate ATP: Gly-8 and Arg-11. Residues Gly-8 and Arg-11 each contribute to the CTP site. Residues Asp-21 and Asp-23 each contribute to the Mg(2+) site. The ATP site is built by Arg-91, Arg-137, and Arg-140. CTP contacts are provided by Arg-91, Arg-137, and Arg-140. The HD domain occupies 226 to 327 (TGVHLMMVLD…VRLFDRCDAW (102 aa)).

This sequence belongs to the tRNA nucleotidyltransferase/poly(A) polymerase family. Bacterial CCA-adding enzyme type 1 subfamily. Monomer. Can also form homodimers and oligomers. Mg(2+) is required as a cofactor. It depends on Ni(2+) as a cofactor.

The enzyme catalyses a tRNA precursor + 2 CTP + ATP = a tRNA with a 3' CCA end + 3 diphosphate. It catalyses the reaction a tRNA with a 3' CCA end + 2 CTP + ATP = a tRNA with a 3' CCACCA end + 3 diphosphate. In terms of biological role, catalyzes the addition and repair of the essential 3'-terminal CCA sequence in tRNAs without using a nucleic acid template. Adds these three nucleotides in the order of C, C, and A to the tRNA nucleotide-73, using CTP and ATP as substrates and producing inorganic pyrophosphate. tRNA 3'-terminal CCA addition is required both for tRNA processing and repair. Also involved in tRNA surveillance by mediating tandem CCA addition to generate a CCACCA at the 3' terminus of unstable tRNAs. While stable tRNAs receive only 3'-terminal CCA, unstable tRNAs are marked with CCACCA and rapidly degraded. The sequence is that of Multifunctional CCA protein from Leptothrix cholodnii (strain ATCC 51168 / LMG 8142 / SP-6) (Leptothrix discophora (strain SP-6)).